The chain runs to 427 residues: Cyclic 2,3-diphosphoglycerate synthetase (427 aa).

This sequence belongs to the cyclic 2,3-diphosphoglycerate synthetase family.

The protein localises to the cytoplasm. It catalyses the reaction (2R)-2,3-bisphosphoglycerate + ATP + H(+) = cyclic (2R)-2,3-bisphosphoglycerate + ADP + phosphate. Its function is as follows. Catalyzes the formation of cyclic 2,3-diphosphoglycerate (cDPG) by formation of an intramolecular phosphoanhydride bond at the expense of ATP. In Pyrococcus abyssi (strain GE5 / Orsay), this protein is Cyclic 2,3-diphosphoglycerate synthetase.